A 511-amino-acid chain; its full sequence is Coatomer subunit delta (511 aa).

Basic and acidic residues predominate over residues 168 to 177 (QARRDAERQG). Residues 168–188 (QARRDAERQGKKAPGFGGFGS) form a disordered region. Phosphoserine is present on S223. 2 positions are modified to N6-acetyllysine: K233 and K241. S244 bears the Phosphoserine mark. The region spanning 271 to 511 (MESVHMKIEE…TFLVDKYEIL (241 aa)) is the MHD domain. Residues K309 and K351 each carry the N6-acetyllysine modification. S493 bears the Phosphoserine mark.

It belongs to the adaptor complexes medium subunit family. Delta-COP subfamily. Oligomeric complex that consists of at least the alpha, beta, beta', gamma, delta, epsilon and zeta subunits.

Its subcellular location is the cytoplasm. The protein localises to the golgi apparatus membrane. It is found in the cytoplasmic vesicle. The protein resides in the COPI-coated vesicle membrane. The coatomer is a cytosolic protein complex that binds to dilysine motifs and reversibly associates with Golgi non-clathrin-coated vesicles, which further mediate biosynthetic protein transport from the ER, via the Golgi up to the trans Golgi network. Coatomer complex is required for budding from Golgi membranes, and is essential for the retrograde Golgi-to-ER transport of dilysine-tagged proteins. In mammals, the coatomer can only be recruited by membranes associated to ADP-ribosylation factors (ARFs), which are small GTP-binding proteins; the complex also influences the Golgi structural integrity, as well as the processing, activity, and endocytic recycling of LDL receptors. This Rattus norvegicus (Rat) protein is Coatomer subunit delta (Arcn1).